Reading from the N-terminus, the 203-residue chain is Glycerol-3-phosphate acyltransferase (203 aa).

The next 6 membrane-spanning stretches (helical) occupy residues 1 to 21 (MPAW…GSIP), 52 to 72 (VGKG…AAAV), 73 to 93 (ALGS…GAVI), 115 to 135 (ILLA…LLGI), 140 to 160 (IVSF…WALG), and 161 to 181 (QPLP…AAHR).

This sequence belongs to the PlsY family. As to quaternary structure, probably interacts with PlsX.

It localises to the cell inner membrane. It catalyses the reaction an acyl phosphate + sn-glycerol 3-phosphate = a 1-acyl-sn-glycero-3-phosphate + phosphate. It participates in lipid metabolism; phospholipid metabolism. Functionally, catalyzes the transfer of an acyl group from acyl-phosphate (acyl-PO(4)) to glycerol-3-phosphate (G3P) to form lysophosphatidic acid (LPA). This enzyme utilizes acyl-phosphate as fatty acyl donor, but not acyl-CoA or acyl-ACP. This is Glycerol-3-phosphate acyltransferase from Synechococcus sp. (strain JA-3-3Ab) (Cyanobacteria bacterium Yellowstone A-Prime).